Here is a 238-residue protein sequence, read N- to C-terminus: 3-dehydroquinate dehydratase (238 aa).

Residues 35-37 (ELR) and Arg70 each bind 3-dehydroquinate. Catalysis depends on His133, which acts as the Proton donor/acceptor. Lys160 functions as the Schiff-base intermediate with substrate in the catalytic mechanism. 3-dehydroquinate-binding residues include Arg202 and Gln225.

It belongs to the type-I 3-dehydroquinase family. In terms of assembly, homodimer.

It catalyses the reaction 3-dehydroquinate = 3-dehydroshikimate + H2O. It participates in metabolic intermediate biosynthesis; chorismate biosynthesis; chorismate from D-erythrose 4-phosphate and phosphoenolpyruvate: step 3/7. In terms of biological role, involved in the third step of the chorismate pathway, which leads to the biosynthesis of aromatic amino acids. Catalyzes the cis-dehydration of 3-dehydroquinate (DHQ) and introduces the first double bond of the aromatic ring to yield 3-dehydroshikimate. This is 3-dehydroquinate dehydratase from Staphylococcus aureus (strain bovine RF122 / ET3-1).